We begin with the raw amino-acid sequence, 215 residues long: Pyrrolidone-carboxylate peptidase (215 aa).

Residues E78, C141, and H165 contribute to the active site.

It belongs to the peptidase C15 family. As to quaternary structure, homotetramer.

The protein resides in the cytoplasm. It catalyses the reaction Release of an N-terminal pyroglutamyl group from a polypeptide, the second amino acid generally not being Pro.. In terms of biological role, removes 5-oxoproline from various penultimate amino acid residues except L-proline. The protein is Pyrrolidone-carboxylate peptidase of Lactobacillus johnsonii (strain CNCM I-12250 / La1 / NCC 533).